We begin with the raw amino-acid sequence, 119 residues long: Developmental pluripotency-associated protein 5B/5C (119 aa).

Positions 24 to 86 constitute a KH; atypical domain; the sequence is PEVFQVQSLV…SIKVRAKWLL (63 aa).

This sequence belongs to the KHDC1 family.

The protein resides in the cytoplasm. Involved in the maintenance of embryonic stem (ES) cell pluripotency. Dispensable for self-renewal of pluripotent ES cells and establishment of germ cells. Associates with specific target mRNAs. In Mus musculus (Mouse), this protein is Developmental pluripotency-associated protein 5B/5C.